We begin with the raw amino-acid sequence, 486 residues long: Kynurenine 3-monooxygenase (486 aa).

Residues Val-19, 37-40 (YEAR), and Ala-57 contribute to the FAD site. L-kynurenine is bound by residues Arg-85 and Tyr-99. FAD contacts are provided by residues Arg-111, Leu-136, Thr-172, Asp-304, and 317–318 (MN). 2 residues coordinate L-kynurenine: Asn-363 and Tyr-398. 2 helical membrane-spanning segments follow: residues 385 to 404 (FLHAIMPSTFIPLYTMVTFS) and 425 to 445 (GLFFLGSLIAISSTYLLIHYM). Residue Asn-465 is glycosylated (N-linked (GlcNAc...) asparagine).

The protein belongs to the aromatic-ring hydroxylase family. KMO subfamily. FAD serves as cofactor. In terms of tissue distribution, highest levels in placenta and liver. Detectable in kidney.

It is found in the mitochondrion outer membrane. It carries out the reaction L-kynurenine + NADPH + O2 + H(+) = 3-hydroxy-L-kynurenine + NADP(+) + H2O. Its pathway is cofactor biosynthesis; NAD(+) biosynthesis; quinolinate from L-kynurenine: step 1/3. Catalyzes the hydroxylation of L-kynurenine (L-Kyn) to form 3-hydroxy-L-kynurenine (L-3OHKyn). Required for synthesis of quinolinic acid, a neurotoxic NMDA receptor antagonist and potential endogenous inhibitor of NMDA receptor signaling in axonal targeting, synaptogenesis and apoptosis during brain development. Quinolinic acid may also affect NMDA receptor signaling in pancreatic beta cells, osteoblasts, myocardial cells, and the gastrointestinal tract. The protein is Kynurenine 3-monooxygenase of Homo sapiens (Human).